A 167-amino-acid polypeptide reads, in one-letter code: Schlafen-like protein (167 aa).

It belongs to the Schlafen family. Subgroup poxviridae B3 subfamily.

The sequence is that of Schlafen-like protein from Bos taurus (Bovine).